The chain runs to 547 residues: MLRQWWLRSVGSCSTVYRAHSGCSTSAAVKPKRAIPTDGLQLSDFIKESTKKQRQKAIIPSIEDTKEYLNPEDLQGNGRTVCYVTYGCQMNVSDMEIVRSIMTKYGFVESDKKENADIVLLMTCSIRDGAEKKVWNQLKLIRSNSVNKGQIVGVLGCMAERVRHDLLEKRNLVNIVAGPDSYRDLPRLVAVAAGGSNGINVQLSLDETYADVQPIRVDSASKTAFISIMRGCDNMCTYCVVPFTRGRERSRPIESIVEEVQRLRDQGYKQVTLLGQNVNSYRDMTSMDFSMAPSTSQEDRVPGFKTVYKPKSGGLTFTTLLEKVADAAPDIRFRFTSPHPKDFPMQLIELIASRPNLCKQLHLPAQSGDDETLERMERGYTRDLYLRLVDDIRHVLPSVSLTSDFIAGFCGETEQAHQNTLSLIRAVRYSFCFVFPYSMRGKTRAHHRLTDDVPEDVKARRHLDLTTVFREEALKLNQALIGSEQTVLLEGKSKRDASFSHGRIDGGVKAVFDNSKLCLEPGQYAKILITDANSQTLKAQLIGQSSI.

Residues 79–194 (RTVCYVTYGC…LPRLVAVAAG (116 aa)) enclose the MTTase N-terminal domain. Positions 88, 124, 157, 232, 236, and 239 each coordinate [4Fe-4S] cluster. Residues 218–475 (DSASKTAFIS…TTVFREEALK (258 aa)) form the Radical SAM core domain. Positions 478 to 543 (QALIGSEQTV…SQTLKAQLIG (66 aa)) constitute a TRAM domain.

Belongs to the methylthiotransferase family. MiaB subfamily. [4Fe-4S] cluster is required as a cofactor.

Functionally, potential regulator of CDK5 activity. In Caenorhabditis elegans, this protein is CDK5RAP1-like protein.